Consider the following 126-residue polypeptide: Small ribosomal subunit protein uS12 (126 aa).

The tract at residues 1–26 is disordered; that stretch reads MPTINQLVRKGRASETTKSKSPALQD. A 3-methylthioaspartic acid modification is found at Asp-89. The interval 101-126 is disordered; sequence SLDTQGVKDRKQARSKYGAKRAKAAK. Basic residues predominate over residues 113–126; that stretch reads ARSKYGAKRAKAAK.

The protein belongs to the universal ribosomal protein uS12 family. As to quaternary structure, part of the 30S ribosomal subunit. Contacts proteins S8 and S17. May interact with IF1 in the 30S initiation complex.

In terms of biological role, with S4 and S5 plays an important role in translational accuracy. Functionally, interacts with and stabilizes bases of the 16S rRNA that are involved in tRNA selection in the A site and with the mRNA backbone. Located at the interface of the 30S and 50S subunits, it traverses the body of the 30S subunit contacting proteins on the other side and probably holding the rRNA structure together. The combined cluster of proteins S8, S12 and S17 appears to hold together the shoulder and platform of the 30S subunit. The protein is Small ribosomal subunit protein uS12 of Burkholderia pseudomallei (strain 1106a).